Consider the following 430-residue polypeptide: Adenylosuccinate synthetase (430 aa).

Residues 12–18 and 40–42 contribute to the GTP site; these read GDEGKGK and GHT. The active-site Proton acceptor is aspartate 13. Mg(2+) contacts are provided by aspartate 13 and glycine 40. IMP-binding positions include 13-16, 38-41, threonine 128, arginine 142, glutamine 223, threonine 238, and arginine 302; these read DEGK and NAGH. Residue histidine 41 is the Proton donor of the active site. Substrate is bound at residue 298 to 304; it reads TTTGRPR. GTP-binding positions include arginine 304, 330–332, and 412–414; these read LLD and SVG.

It belongs to the adenylosuccinate synthetase family. Homodimer. Requires Mg(2+) as cofactor.

The protein localises to the cytoplasm. It catalyses the reaction IMP + L-aspartate + GTP = N(6)-(1,2-dicarboxyethyl)-AMP + GDP + phosphate + 2 H(+). It participates in purine metabolism; AMP biosynthesis via de novo pathway; AMP from IMP: step 1/2. In terms of biological role, plays an important role in the de novo pathway of purine nucleotide biosynthesis. Catalyzes the first committed step in the biosynthesis of AMP from IMP. The protein is Adenylosuccinate synthetase of Listeria welshimeri serovar 6b (strain ATCC 35897 / DSM 20650 / CCUG 15529 / CIP 8149 / NCTC 11857 / SLCC 5334 / V8).